Reading from the N-terminus, the 430-residue chain is Arrestin-related trafficking adapter 10 (430 aa).

Residues Ala55 to Glu75 form a disordered region. Over residues Arg63–Tyr72 the composition is skewed to polar residues.

This sequence belongs to the ART10 family.

The protein resides in the cytoplasm. Its function is as follows. May regulate endocytosis by recruiting RSP5 ubiquitin ligase activity to specific plasma membrane proteins in response to extracellular stimuli. In Eremothecium gossypii (strain ATCC 10895 / CBS 109.51 / FGSC 9923 / NRRL Y-1056) (Yeast), this protein is Arrestin-related trafficking adapter 10 (ART10).